A 368-amino-acid polypeptide reads, in one-letter code: tRNA-specific 2-thiouridylase MnmA (368 aa).

ATP contacts are provided by residues 12–19 (GMSGGVDS) and Met38. Residues 98–100 (NPD) are interaction with target base in tRNA. The active-site Nucleophile is Cys103. Cys103 and Cys200 are oxidised to a cystine. Residue Gly128 participates in ATP binding. The segment at 150–152 (KDQ) is interaction with tRNA. Cys200 acts as the Cysteine persulfide intermediate in catalysis. An interaction with tRNA region spans residues 313–314 (RY).

Belongs to the MnmA/TRMU family. As to quaternary structure, interacts with TusE.

The protein resides in the cytoplasm. The catalysed reaction is S-sulfanyl-L-cysteinyl-[protein] + uridine(34) in tRNA + AH2 + ATP = 2-thiouridine(34) in tRNA + L-cysteinyl-[protein] + A + AMP + diphosphate + H(+). Its function is as follows. Catalyzes the 2-thiolation of uridine at the wobble position (U34) of tRNA(Lys), tRNA(Glu) and tRNA(Gln), leading to the formation of s(2)U34, the first step of tRNA-mnm(5)s(2)U34 synthesis. Sulfur is provided by IscS, via a sulfur-relay system. Binds ATP and its substrate tRNAs. The polypeptide is tRNA-specific 2-thiouridylase MnmA (Pectobacterium atrosepticum (strain SCRI 1043 / ATCC BAA-672) (Erwinia carotovora subsp. atroseptica)).